Here is a 504-residue protein sequence, read N- to C-terminus: Multidrug efflux pump LfrA (504 aa).

14 helical membrane passes run 19 to 39, 58 to 78, 87 to 107, 110 to 130, 145 to 165, 172 to 192, 206 to 226, 233 to 253, 275 to 295, 309 to 329, 338 to 358, 361 to 381, 408 to 428, and 480 to 500; these read WVAL…NTVL, LWIV…MGSL, LLLI…FAPS, LLVG…PSTL, LAIA…PIVG, FHWG…LVLG, PFDP…VWAV, GLSA…ALFV, TSSI…IFFI, TAGL…LAVV, DTLM…ILLF, NLTV…VGVS, AYEL…TAFY, and IAPT…VVGV.

The protein belongs to the major facilitator superfamily.

It localises to the cell inner membrane. With respect to regulation, inhibited by the protonophore carbonyl cyanide m-chorophenylhydrazone (CCCP). Ethidium bromide efflux is inhibited by chlorpromazine, thioridazine and verapamil. Energy-dependent efflux pump that contributes to drug resistance. Catalyzes the efflux of norfloxacin and several related fluoroquinolones (FQ). Contributes significantly to the intrinsic MICs for ethidium bromide and acriflavine. Overexpression confers low-level resistance to hydrophilic FQ such as ciprofloxacin, ofloxacin and levofloxacin, and to ethidium bromide, acridine, acriflavine, rhodamine 123 and some quaternary ammonium compounds. May contribute to resistance to certain beta-lactams. Probably uses the proton motive force to export drugs. The chain is Multidrug efflux pump LfrA from Mycolicibacterium smegmatis (strain ATCC 700084 / mc(2)155) (Mycobacterium smegmatis).